Here is a 209-residue protein sequence, read N- to C-terminus: Protein GrpE (209 aa).

The disordered stretch occupies residues 1-63 (MKKSRKKENM…NPEEACREEN (63 aa)). Composition is skewed to basic and acidic residues over residues 7-42 (KENM…KVSP) and 50-63 (EAEK…REEN).

Belongs to the GrpE family. As to quaternary structure, homodimer.

Its subcellular location is the cytoplasm. Functionally, participates actively in the response to hyperosmotic and heat shock by preventing the aggregation of stress-denatured proteins, in association with DnaK and GrpE. It is the nucleotide exchange factor for DnaK and may function as a thermosensor. Unfolded proteins bind initially to DnaJ; upon interaction with the DnaJ-bound protein, DnaK hydrolyzes its bound ATP, resulting in the formation of a stable complex. GrpE releases ADP from DnaK; ATP binding to DnaK triggers the release of the substrate protein, thus completing the reaction cycle. Several rounds of ATP-dependent interactions between DnaJ, DnaK and GrpE are required for fully efficient folding. In Methanosarcina mazei (strain ATCC BAA-159 / DSM 3647 / Goe1 / Go1 / JCM 11833 / OCM 88) (Methanosarcina frisia), this protein is Protein GrpE.